The sequence spans 255 residues: 4-hydroxy-tetrahydrodipicolinate reductase (255 aa).

Residues 9 to 14, Asp-35, 89 to 91, and 115 to 118 each bind NAD(+); these read GFKGKM, GTT, and APNF. The active-site Proton donor/acceptor is the His-145. His-146 contributes to the (S)-2,3,4,5-tetrahydrodipicolinate binding site. Residue Lys-149 is the Proton donor of the active site. 155 to 156 lines the (S)-2,3,4,5-tetrahydrodipicolinate pocket; the sequence is GT.

This sequence belongs to the DapB family.

It localises to the cytoplasm. The enzyme catalyses (S)-2,3,4,5-tetrahydrodipicolinate + NAD(+) + H2O = (2S,4S)-4-hydroxy-2,3,4,5-tetrahydrodipicolinate + NADH + H(+). It catalyses the reaction (S)-2,3,4,5-tetrahydrodipicolinate + NADP(+) + H2O = (2S,4S)-4-hydroxy-2,3,4,5-tetrahydrodipicolinate + NADPH + H(+). It participates in amino-acid biosynthesis; L-lysine biosynthesis via DAP pathway; (S)-tetrahydrodipicolinate from L-aspartate: step 4/4. In terms of biological role, catalyzes the conversion of 4-hydroxy-tetrahydrodipicolinate (HTPA) to tetrahydrodipicolinate. In Streptococcus pneumoniae (strain P1031), this protein is 4-hydroxy-tetrahydrodipicolinate reductase.